Consider the following 444-residue polypeptide: 23S rRNA (uracil(1939)-C(5))-methyltransferase RlmD (444 aa).

A TRAM domain is found at Arg-5–Glu-67. 4 residues coordinate [4Fe-4S] cluster: Cys-80, Cys-86, Cys-89, and Cys-168. Gln-276, Phe-305, Asn-310, Glu-326, Asp-353, and Asp-374 together coordinate S-adenosyl-L-methionine. Residue Cys-400 is the Nucleophile of the active site.

This sequence belongs to the class I-like SAM-binding methyltransferase superfamily. RNA M5U methyltransferase family. RlmD subfamily.

The enzyme catalyses uridine(1939) in 23S rRNA + S-adenosyl-L-methionine = 5-methyluridine(1939) in 23S rRNA + S-adenosyl-L-homocysteine + H(+). Its function is as follows. Catalyzes the formation of 5-methyl-uridine at position 1939 (m5U1939) in 23S rRNA. The polypeptide is 23S rRNA (uracil(1939)-C(5))-methyltransferase RlmD (Stenotrophomonas maltophilia (strain R551-3)).